The chain runs to 419 residues: D-amino acid dehydrogenase (419 aa).

3–17 (VLILGGGVVGVTSAY) serves as a coordination point for FAD.

This sequence belongs to the DadA oxidoreductase family. FAD is required as a cofactor.

It catalyses the reaction a D-alpha-amino acid + A + H2O = a 2-oxocarboxylate + AH2 + NH4(+). The protein operates within amino-acid degradation; D-alanine degradation; NH(3) and pyruvate from D-alanine: step 1/1. Oxidative deamination of D-amino acids. The protein is D-amino acid dehydrogenase of Methylobacterium radiotolerans (strain ATCC 27329 / DSM 1819 / JCM 2831 / NBRC 15690 / NCIMB 10815 / 0-1).